A 476-amino-acid chain; its full sequence is Protein transport protein Sec61 subunit alpha isoform B (476 aa).

The Cytoplasmic segment spans residues 2–33 (GIKFLEVIKPFCAVLPEIQKPERKIQFREKVL). A helical membrane pass occupies residues 34-53 (WTAITLFIFLVCCQIPLFGI). The Lumenal portion of the chain corresponds to 54–76 (MSSDSADPFYWMRVILASNRGTL). The helical transmembrane segment at 77–96 (MELGISPIVTSGLIMQLLAG) threads the bilayer. Residues 97 to 117 (AKIIEVGDTPKDRALFNGAQK) lie on the Cytoplasmic side of the membrane. A helical transmembrane segment spans residues 118-138 (LFGMIITIGQAIVYVMTGMYG). The Lumenal portion of the chain corresponds to 139–144 (DPSDMG). The chain crosses the membrane as a helical span at residues 145-165 (AGICLLIIIQLFVAGLIVLLL). At 166-172 (DELLQKG) the chain is on the cytoplasmic side. Residues 173 to 193 (YGLGSGISLFIATNICETIVW) form a helical membrane-spanning segment. Residues 194-240 (KAFSPTTVNTGRGTEFEGAIIALFHLLATRTDKVRALREAFYRQNLP) lie on the Lumenal side of the membrane. The chain crosses the membrane as a helical span at residues 241–261 (NLMNLLATVFVFGVVIYFQGF). Over 262-288 (RVDLPIKSARYRGQYNTYPIKLFYTSN) the chain is Cytoplasmic. A helical membrane pass occupies residues 289-309 (IPIILQSALVSNLYVISQMLS). At 310 to 354 (TRFSGNFLVNLLGTWSDTSSGGPARAYPVGGLCYYFSPPESFGSV) the chain is on the lumenal side. Residues 355-375 (LDDPIHAAIYICFMLGSCAFF) form a helical membrane-spanning segment. Over 376–420 (SKTWIEVSGSSAKDVAKQLKEQQMVMRGHRETSMVHELNRYIPTA) the chain is Cytoplasmic. A helical transmembrane segment spans residues 421–441 (AAFGGLCIGGLSVMADFLGAI). Residues 442–445 (GSGT) are Lumenal-facing. A helical membrane pass occupies residues 446–462 (GILLAVTIIYQYFEIFV). Topologically, residues 463–476 (KEQSEMGSMGALLF) are cytoplasmic.

It belongs to the SecY/SEC61-alpha family. In terms of assembly, the SEC61 channel-forming translocon complex consists of channel-forming core components SEC61A1, SEC61B and SEC61G and different auxiliary components such as SEC62 and SEC63.

The protein resides in the endoplasmic reticulum membrane. Its function is as follows. Component of SEC61 channel-forming translocon complex that mediates transport of signal peptide-containing precursor polypeptides across the endoplasmic reticulum (ER). Forms a ribosome receptor and a gated pore in the ER membrane, both functions required for cotranslational translocation of nascent polypeptides. This Oncorhynchus mykiss (Rainbow trout) protein is Protein transport protein Sec61 subunit alpha isoform B (sec61ab).